A 139-amino-acid polypeptide reads, in one-letter code: Small ribosomal subunit protein uS9 (139 aa).

The protein belongs to the universal ribosomal protein uS9 family.

The polypeptide is Small ribosomal subunit protein uS9 (Coxiella burnetii (strain CbuG_Q212) (Coxiella burnetii (strain Q212))).